We begin with the raw amino-acid sequence, 237 residues long: Phosphoribosylaminoimidazole-succinocarboxamide synthase (237 aa).

This sequence belongs to the SAICAR synthetase family.

The catalysed reaction is 5-amino-1-(5-phospho-D-ribosyl)imidazole-4-carboxylate + L-aspartate + ATP = (2S)-2-[5-amino-1-(5-phospho-beta-D-ribosyl)imidazole-4-carboxamido]succinate + ADP + phosphate + 2 H(+). Its pathway is purine metabolism; IMP biosynthesis via de novo pathway; 5-amino-1-(5-phospho-D-ribosyl)imidazole-4-carboxamide from 5-amino-1-(5-phospho-D-ribosyl)imidazole-4-carboxylate: step 1/2. The protein is Phosphoribosylaminoimidazole-succinocarboxamide synthase of Salmonella arizonae (strain ATCC BAA-731 / CDC346-86 / RSK2980).